The sequence spans 203 residues: Holliday junction branch migration complex subunit RuvA (203 aa).

The segment at 1 to 64 (MIGRLRGYIL…EDAQLLYGFN (64 aa)) is domain I. The interval 65-142 (DKQERALFRE…KGLNGDLFNN (78 aa)) is domain II. Residues 143-154 (SSEITLPTAAQA) form a flexible linker region. The domain III stretch occupies residues 155-203 (AELDAEAEAASALVALGYKPQEASRMVSKIAKPGADCETLIRDALRAAL).

It belongs to the RuvA family. As to quaternary structure, homotetramer. Forms an RuvA(8)-RuvB(12)-Holliday junction (HJ) complex. HJ DNA is sandwiched between 2 RuvA tetramers; dsDNA enters through RuvA and exits via RuvB. An RuvB hexamer assembles on each DNA strand where it exits the tetramer. Each RuvB hexamer is contacted by two RuvA subunits (via domain III) on 2 adjacent RuvB subunits; this complex drives branch migration. In the full resolvosome a probable DNA-RuvA(4)-RuvB(12)-RuvC(2) complex forms which resolves the HJ.

It is found in the cytoplasm. The RuvA-RuvB-RuvC complex processes Holliday junction (HJ) DNA during genetic recombination and DNA repair, while the RuvA-RuvB complex plays an important role in the rescue of blocked DNA replication forks via replication fork reversal (RFR). RuvA specifically binds to HJ cruciform DNA, conferring on it an open structure. The RuvB hexamer acts as an ATP-dependent pump, pulling dsDNA into and through the RuvAB complex. HJ branch migration allows RuvC to scan DNA until it finds its consensus sequence, where it cleaves and resolves the cruciform DNA. The protein is Holliday junction branch migration complex subunit RuvA of Serratia proteamaculans (strain 568).